The primary structure comprises 320 residues: Putative HTH-type transcriptional regulatory protein VNG_2112C (320 aa).

The HTH cro/C1-type domain maps to 132-189 (LADRREDERLSLGQLASELGVSRRTVSKYEDGMNASIEVAMRLEDLFGGELTAPVDVM). Residues 143–162 (LGQLASELGVSRRTVSKYED) constitute a DNA-binding region (H-T-H motif).

This is Putative HTH-type transcriptional regulatory protein VNG_2112C from Halobacterium salinarum (strain ATCC 700922 / JCM 11081 / NRC-1) (Halobacterium halobium).